Consider the following 1034-residue polypeptide: Glycine dehydrogenase (decarboxylating) B, mitochondrial (1034 aa).

The N-terminal 63 residues, 1–63 (MERARRLAIL…LNGFGSQVRT (63 aa)), are a transit peptide targeting the mitochondrion. N6-(pyridoxal phosphate)lysine is present on K770.

This sequence belongs to the GcvP family. In terms of assembly, homodimer. The glycine cleavage system is composed of four proteins: P, T, L and H. Pyridoxal 5'-phosphate is required as a cofactor.

It is found in the mitochondrion. The catalysed reaction is N(6)-[(R)-lipoyl]-L-lysyl-[glycine-cleavage complex H protein] + glycine + H(+) = N(6)-[(R)-S(8)-aminomethyldihydrolipoyl]-L-lysyl-[glycine-cleavage complex H protein] + CO2. The glycine cleavage system catalyzes the degradation of glycine. The P protein binds the alpha-amino group of glycine through its pyridoxal phosphate cofactor; CO(2) is released and the remaining methylamine moiety is then transferred to the lipoamide cofactor of the H protein. This Flaveria pringlei protein is Glycine dehydrogenase (decarboxylating) B, mitochondrial (GDCSPB).